Here is a 126-residue protein sequence, read N- to C-terminus: Larval cuticle protein 2 (126 aa).

The signal sequence occupies residues 1–16; sequence MFKFVMVFAVLGLAAA. Positions 39–100 constitute a Chitin-binding type R&amp;R domain; that stretch reads ADGFDTDLVV…PVGAVLPTPP (62 aa).

Its function is as follows. Component of the larval cuticle. The sequence is that of Larval cuticle protein 2 (Lcp2) from Drosophila miranda (Fruit fly).